The following is a 525-amino-acid chain: Zinc finger protein 678 (525 aa).

14 C2H2-type zinc fingers span residues 97–119 (FQCIECGRNFSWRSILTEHKRIH), 125–147 (YKCEECGKVFNRCSNLTKHKRIH), 153–175 (YKCDECGKVFNWWSQLTNHKKIH), 181–203 (YKCDECDKVFNWWSQLTSHKKIH), 209–231 (YPCEECGKAFTQFSNLTQHKRIH), 237–259 (YKCKECCKAFNKFSNLTQHKRIH), 265–287 (YKCEECGNVFNECSHLTRHRRIH), 293–315 (YKCEECGKAFTQFASLTRHKRIH), 321–343 (YQCEECGKTFNRCSHLSSHKRIH), 349–371 (YKCEECGRTFTQFSNLTQHKRIH), 377–399 (YKCKECGKAFNKFSSLTQHRRIH), 405–427 (YKCEECGKVFKQCSHLTSHKRIH), 433–455 (YKCKECGKAFYQSSILSKHKRIH), and 461–483 (YKCEECGKAFNQFSSLTRHKRIH). The segment at 489 to 511 (YKCKECGKGFYQSSIHSKYKRIY) adopts a C2H2-type 15; degenerate zinc-finger fold.

It belongs to the krueppel C2H2-type zinc-finger protein family.

The protein localises to the nucleus. In terms of biological role, may be involved in transcriptional regulation. The sequence is that of Zinc finger protein 678 (ZNF678) from Homo sapiens (Human).